The following is a 252-amino-acid chain: MSRKPFIAGNWKMNKNPEEAKAFVEAVASKLPSSDLVEAGIAAPALDLTTVLAVAKGSNLKVAAQNCYFENAGAFTGETSPQVLKEIGTDYVVIGHSERRDYFHETDEDINKKAKAIFANGMLPIICCGESLETYEAGKAAEFVGAQVSAALAGLTAEQVAASVIAYEPIWAIGTGKSASQDDAQKMCKVVRDVVAADFGQEVADKVRVQYGGSVKPENVASYMACPDVDGALVGGASLEAESFLALLDFVK.

A substrate-binding site is contributed by 10 to 12 (NWK). The Electrophile role is filled by histidine 96. Catalysis depends on glutamate 168, which acts as the Proton acceptor. Substrate contacts are provided by residues glycine 174, serine 214, and 235–236 (GG).

The protein belongs to the triosephosphate isomerase family. In terms of assembly, homodimer.

The protein localises to the cytoplasm. The catalysed reaction is D-glyceraldehyde 3-phosphate = dihydroxyacetone phosphate. Its pathway is carbohydrate biosynthesis; gluconeogenesis. It participates in carbohydrate degradation; glycolysis; D-glyceraldehyde 3-phosphate from glycerone phosphate: step 1/1. Its function is as follows. Involved in the gluconeogenesis. Catalyzes stereospecifically the conversion of dihydroxyacetone phosphate (DHAP) to D-glyceraldehyde-3-phosphate (G3P). The chain is Triosephosphate isomerase from Streptococcus pneumoniae serotype 2 (strain D39 / NCTC 7466).